A 538-amino-acid polypeptide reads, in one-letter code: Bifunctional purine biosynthesis protein PurH (538 aa).

In terms of domain architecture, MGS-like spans 6–158; the sequence is KHIPAPDLHR…KNHAYVATVV (153 aa).

This sequence belongs to the PurH family.

The enzyme catalyses (6R)-10-formyltetrahydrofolate + 5-amino-1-(5-phospho-beta-D-ribosyl)imidazole-4-carboxamide = 5-formamido-1-(5-phospho-D-ribosyl)imidazole-4-carboxamide + (6S)-5,6,7,8-tetrahydrofolate. The catalysed reaction is IMP + H2O = 5-formamido-1-(5-phospho-D-ribosyl)imidazole-4-carboxamide. Its pathway is purine metabolism; IMP biosynthesis via de novo pathway; 5-formamido-1-(5-phospho-D-ribosyl)imidazole-4-carboxamide from 5-amino-1-(5-phospho-D-ribosyl)imidazole-4-carboxamide (10-formyl THF route): step 1/1. The protein operates within purine metabolism; IMP biosynthesis via de novo pathway; IMP from 5-formamido-1-(5-phospho-D-ribosyl)imidazole-4-carboxamide: step 1/1. The polypeptide is Bifunctional purine biosynthesis protein PurH (Brucella abortus (strain S19)).